A 465-amino-acid chain; its full sequence is Putative apoptosis inhibitor ORF106 (465 aa).

A BIR repeat occupies 291–357 (RECSFSTWPK…MEKETCGWLE (67 aa)). Positions 373 to 382 (EGGEDKEEDG) are enriched in acidic residues. Positions 373–393 (EGGEDKEEDGGGGGVIEFPKN) are disordered. An RING-type zinc finger spans residues 405–447 (CKACYERKADIAFIPCGHVFSCNICTMEMFASYKKKKRCPMCR).

In Magallana gigas (Pacific oyster), this protein is Putative apoptosis inhibitor ORF106.